A 211-amino-acid polypeptide reads, in one-letter code: Arginine exporter protein ArgO (211 aa).

6 consecutive transmembrane segments (helical) span residues 1–21 (MFTYYFQGLALGAAMILPLGP), 37–57 (LMIALLCAVSDLLLICAGIFG), 68–88 (LLALVTWGGVAFLLCYGFGAL), 111–131 (IIITMLAVTWLNPHVYLDTFV), 147–167 (WFALGTISASFLWFFGLALLA), and 179–199 (AQRIINIVVGAVMWFIAFQLA).

The protein belongs to the LysE/ArgO transporter (TC 2.A.75) family.

Its subcellular location is the cell inner membrane. The enzyme catalyses L-arginine(in) = L-arginine(out). Its function is as follows. Involved in the export of arginine. Important to control the intracellular level of arginine and the correct balance between arginine and lysine. In Klebsiella pneumoniae subsp. pneumoniae (strain ATCC 700721 / MGH 78578), this protein is Arginine exporter protein ArgO.